Reading from the N-terminus, the 226-residue chain is Ribonuclease 3 (226 aa).

An RNase III domain is found at 6–128 (INKLQRKLGY…LIGGVFLDSD (123 aa)). E41 lines the Mg(2+) pocket. D45 is a catalytic residue. Residues D114 and E117 each contribute to the Mg(2+) site. E117 is a catalytic residue. Residues 155 to 225 (DPKTRLQEFL…AEQALIKLGI (71 aa)) form the DRBM domain.

Belongs to the ribonuclease III family. As to quaternary structure, homodimer. The cofactor is Mg(2+).

Its subcellular location is the cytoplasm. It catalyses the reaction Endonucleolytic cleavage to 5'-phosphomonoester.. In terms of biological role, digests double-stranded RNA. Involved in the processing of primary rRNA transcript to yield the immediate precursors to the large and small rRNAs (23S and 16S). Processes some mRNAs, and tRNAs when they are encoded in the rRNA operon. Processes pre-crRNA and tracrRNA of type II CRISPR loci if present in the organism. The chain is Ribonuclease 3 from Erwinia tasmaniensis (strain DSM 17950 / CFBP 7177 / CIP 109463 / NCPPB 4357 / Et1/99).